Reading from the N-terminus, the 291-residue chain is MFQGAMVAIVTPFKAGQVDEETFRNLIEFQIANGTHGIVPCGTTGESATLSFNEHERVIEIAVEQVDKRVPVIAGTGSNNTEEAIRLTKHAKNAGADGALLISPYYNKPTQEGLYRHYEKIAKAVDIPLVPYNIPGRTAVNMEPDTIARLAKIDNIVAIKEAAGSMKQITDIIARCGDELVVLSGEDFLTFPLLCVGGKGVISVVSNIAPADMANLCNLFLGGDFDAARKLYYRLLPLCHGLFYETNPAPVKAALAMMNKIPSDELRLPLAPMSPANRLRLRQDLQAYGLI.

Residue T44 participates in pyruvate binding. Y132 (proton donor/acceptor) is an active-site residue. K160 acts as the Schiff-base intermediate with substrate in catalysis. Position 202 (I202) interacts with pyruvate.

It belongs to the DapA family. Homotetramer; dimer of dimers.

The protein localises to the cytoplasm. It carries out the reaction L-aspartate 4-semialdehyde + pyruvate = (2S,4S)-4-hydroxy-2,3,4,5-tetrahydrodipicolinate + H2O + H(+). The protein operates within amino-acid biosynthesis; L-lysine biosynthesis via DAP pathway; (S)-tetrahydrodipicolinate from L-aspartate: step 3/4. In terms of biological role, catalyzes the condensation of (S)-aspartate-beta-semialdehyde [(S)-ASA] and pyruvate to 4-hydroxy-tetrahydrodipicolinate (HTPA). The sequence is that of 4-hydroxy-tetrahydrodipicolinate synthase from Syntrophobacter fumaroxidans (strain DSM 10017 / MPOB).